The primary structure comprises 251 residues: Triosephosphate isomerase (251 aa).

9 to 11 (NWK) contributes to the substrate binding site. Residue histidine 95 is the Electrophile of the active site. Catalysis depends on glutamate 167, which acts as the Proton acceptor. Substrate-binding positions include glycine 173, serine 212, and 233 to 234 (GG).

This sequence belongs to the triosephosphate isomerase family. Homodimer.

The protein localises to the cytoplasm. The enzyme catalyses D-glyceraldehyde 3-phosphate = dihydroxyacetone phosphate. Its pathway is carbohydrate biosynthesis; gluconeogenesis. It participates in carbohydrate degradation; glycolysis; D-glyceraldehyde 3-phosphate from glycerone phosphate: step 1/1. Its function is as follows. Involved in the gluconeogenesis. Catalyzes stereospecifically the conversion of dihydroxyacetone phosphate (DHAP) to D-glyceraldehyde-3-phosphate (G3P). The polypeptide is Triosephosphate isomerase (Pseudomonas fluorescens (strain Pf0-1)).